The primary structure comprises 115 residues: Protein V2 (115 aa).

This sequence belongs to the geminiviridae protein AV2/V2 family. In terms of assembly, interacts with host SGS3.

The protein resides in the host cytoplasm. Its subcellular location is the host perinuclear region. Its function is as follows. Through its interaction with host SGS3, acts as a suppressor of RNA-mediated gene silencing, also known as post-transcriptional gene silencing (PTGS), a mechanism of plant viral defense that limits the accumulation of viral RNAs. The chain is Protein V2 from Tomato yellow leaf curl Sardinia virus (TYLCSV).